Consider the following 244-residue polypeptide: tRNA (guanine-N(7)-)-methyltransferase (244 aa).

Residues 1–10 (MSDTPQSPAQ) are compositionally biased toward polar residues. Positions 1-20 (MSDTPQSPAQDSLAEHDEAR) are disordered. 4 residues coordinate S-adenosyl-L-methionine: Glu-74, Glu-99, Asp-126, and Asp-149. Asp-149 is a catalytic residue. Substrate contacts are provided by residues Lys-153, Asp-185, and 222–225 (TKFE).

This sequence belongs to the class I-like SAM-binding methyltransferase superfamily. TrmB family.

The enzyme catalyses guanosine(46) in tRNA + S-adenosyl-L-methionine = N(7)-methylguanosine(46) in tRNA + S-adenosyl-L-homocysteine. Its pathway is tRNA modification; N(7)-methylguanine-tRNA biosynthesis. Catalyzes the formation of N(7)-methylguanine at position 46 (m7G46) in tRNA. This chain is tRNA (guanine-N(7)-)-methyltransferase, found in Pseudomonas aeruginosa (strain ATCC 15692 / DSM 22644 / CIP 104116 / JCM 14847 / LMG 12228 / 1C / PRS 101 / PAO1).